The primary structure comprises 193 residues: 7-methyl-GTP pyrophosphatase (193 aa).

Residue Asp-70 is the Proton acceptor of the active site.

This sequence belongs to the Maf family. YceF subfamily. A divalent metal cation serves as cofactor.

The protein resides in the cytoplasm. The enzyme catalyses N(7)-methyl-GTP + H2O = N(7)-methyl-GMP + diphosphate + H(+). Functionally, nucleoside triphosphate pyrophosphatase that hydrolyzes 7-methyl-GTP (m(7)GTP). May have a dual role in cell division arrest and in preventing the incorporation of modified nucleotides into cellular nucleic acids. In Vibrio parahaemolyticus serotype O3:K6 (strain RIMD 2210633), this protein is 7-methyl-GTP pyrophosphatase.